The sequence spans 263 residues: Phosphatidylglycerol--prolipoprotein diacylglyceryl transferase (263 aa).

Transmembrane regions (helical) follow at residues 17 to 37 (LSVRWYGLMYLVAFVQFIFLG), 56 to 76 (LLFYGMLGVILGGRLGQVLFY), and 88 to 108 (IFAVWKGGMSFHGGFLGVLVA). Arg-139 serves as a coordination point for a 1,2-diacyl-sn-glycero-3-phospho-(1'-sn-glycerol). The next 2 helical transmembrane spans lie at 176 to 196 (QLYHVGLEGLALFVILWWFTA) and 236 to 256 (ISMGQWLSLPMILIGVAMVVF).

The protein belongs to the Lgt family.

Its subcellular location is the cell inner membrane. The enzyme catalyses L-cysteinyl-[prolipoprotein] + a 1,2-diacyl-sn-glycero-3-phospho-(1'-sn-glycerol) = an S-1,2-diacyl-sn-glyceryl-L-cysteinyl-[prolipoprotein] + sn-glycerol 1-phosphate + H(+). The protein operates within protein modification; lipoprotein biosynthesis (diacylglyceryl transfer). Catalyzes the transfer of the diacylglyceryl group from phosphatidylglycerol to the sulfhydryl group of the N-terminal cysteine of a prolipoprotein, the first step in the formation of mature lipoproteins. This is Phosphatidylglycerol--prolipoprotein diacylglyceryl transferase from Dechloromonas aromatica (strain RCB).